The sequence spans 495 residues: Meiosis-specific nuclear structural protein 1 (495 aa).

Residues 1 to 314 (MGSKRRNLSC…KLEEMLRQRE (314 aa)) form an interaction with BBOF1 region. Positions 28–410 (VQALKNVNSQ…QLEHRRAVEK (383 aa)) form a coiled coil. Tyrosine 188 bears the Phosphotyrosine mark.

It belongs to the MNS1 family. As to quaternary structure, able to form oligomers. Microtubule inner protein component of sperm flagellar doublet microtubules. Interacts with ODAD1. Interacts with BBOF1. As to expression, expressed in nasal respiratory epithelium and in the sperm.

The protein resides in the nucleus. It is found in the cytoplasm. Its subcellular location is the cytoskeleton. The protein localises to the cilium axoneme. It localises to the flagellum axoneme. Microtubule inner protein (MIP) part of the dynein-decorated doublet microtubules (DMTs) in cilia axoneme, which is required for motile cilia beating. May play a role in the control of meiotic division and germ cell differentiation through regulation of pairing and recombination during meiosis. Required for sperm flagella assembly. May play a role in the assembly and function of the outer dynein arm-docking complex (ODA-DC). ODA-DC mediates outer dynein arms (ODA) binding onto the axonemal doublet microtubules. This chain is Meiosis-specific nuclear structural protein 1, found in Homo sapiens (Human).